A 346-amino-acid polypeptide reads, in one-letter code: D-alanine--D-alanine ligase (346 aa).

Positions K133–E324 constitute an ATP-grasp domain. L159–Y211 lines the ATP pocket. The Mg(2+) site is built by D284, E296, and N298.

Belongs to the D-alanine--D-alanine ligase family. Mg(2+) is required as a cofactor. The cofactor is Mn(2+).

The protein localises to the cytoplasm. The catalysed reaction is 2 D-alanine + ATP = D-alanyl-D-alanine + ADP + phosphate + H(+). It participates in cell wall biogenesis; peptidoglycan biosynthesis. Cell wall formation. The protein is D-alanine--D-alanine ligase of Campylobacter lari (strain RM2100 / D67 / ATCC BAA-1060).